Reading from the N-terminus, the 345-residue chain is Dihydroorotate dehydrogenase (quinone) (345 aa).

FMN contacts are provided by residues 65–69 (AGLDK) and Thr89. Lys69 serves as a coordination point for substrate. 114–118 (NRMGF) is a substrate binding site. 2 residues coordinate FMN: Asn142 and Asn175. Asn175 contacts substrate. The active-site Nucleophile is Ser178. Asn180 lines the substrate pocket. The FMN site is built by Lys220 and Thr248. 249-250 (NT) contributes to the substrate binding site. FMN is bound by residues Gly271, Gly300, and 321–322 (YT).

The protein belongs to the dihydroorotate dehydrogenase family. Type 2 subfamily. As to quaternary structure, monomer. It depends on FMN as a cofactor.

Its subcellular location is the cell membrane. The catalysed reaction is (S)-dihydroorotate + a quinone = orotate + a quinol. The protein operates within pyrimidine metabolism; UMP biosynthesis via de novo pathway; orotate from (S)-dihydroorotate (quinone route): step 1/1. Catalyzes the conversion of dihydroorotate to orotate with quinone as electron acceptor. This is Dihydroorotate dehydrogenase (quinone) from Burkholderia multivorans (strain ATCC 17616 / 249).